A 265-amino-acid chain; its full sequence is Small ribosomal subunit protein uS2 (265 aa).

The protein belongs to the universal ribosomal protein uS2 family.

This is Small ribosomal subunit protein uS2 from Gluconobacter oxydans (strain 621H) (Gluconobacter suboxydans).